Reading from the N-terminus, the 132-residue chain is Ribosome-binding factor A (132 aa).

The protein belongs to the RbfA family. In terms of assembly, monomer. Binds 30S ribosomal subunits, but not 50S ribosomal subunits or 70S ribosomes.

Its subcellular location is the cytoplasm. Its function is as follows. One of several proteins that assist in the late maturation steps of the functional core of the 30S ribosomal subunit. Associates with free 30S ribosomal subunits (but not with 30S subunits that are part of 70S ribosomes or polysomes). Required for efficient processing of 16S rRNA. May interact with the 5'-terminal helix region of 16S rRNA. This Rhizorhabdus wittichii (strain DSM 6014 / CCUG 31198 / JCM 15750 / NBRC 105917 / EY 4224 / RW1) (Sphingomonas wittichii) protein is Ribosome-binding factor A.